Consider the following 502-residue polypeptide: Dipeptide and tripeptide permease A (502 aa).

Topologically, residues 1–35 (MSTANNKPTDESVSLNAFKQPKAFYLIFSIELWER) are cytoplasmic. The chain crosses the membrane as a helical span at residues 36 to 56 (FGFYGLQGIMAVYLVKQLGMS). Residues 57–60 (EADS) lie on the Periplasmic side of the membrane. The chain crosses the membrane as a helical span at residues 61 to 81 (ITLFSSFSALVYGLVAVGGWL). Residues 82–90 (GDKVLGTKR) lie on the Cytoplasmic side of the membrane. A helical transmembrane segment spans residues 91-111 (VIMLGAVVLAIGYGLVAWSGH). Aspartate 112 is a topological domain (periplasmic). Residues 113-133 (AAVVYMGMATIAVGNGLFKAN) form a helical membrane-spanning segment. The Cytoplasmic segment spans residues 134 to 154 (PSSLLSTCYNKDDPRLDGAFT). Residues 155–175 (MYYMSINIGSFFSMLATPWLA) form a helical membrane-spanning segment. Residues 176–179 (AKFG) lie on the Periplasmic side of the membrane. The chain crosses the membrane as a helical span at residues 180–200 (WSVAFALSFVGMLITVVNFLF). Residues 201–218 (CRSWVKNYGSKPDFEPVH) are Cytoplasmic-facing. The chain crosses the membrane as a helical span at residues 219–239 (IGKLLATIVGVVILATIATWL). Residues 240–247 (LHNQGVAR) lie on the Periplasmic side of the membrane. The helical transmembrane segment at 248 to 268 (AVLGVVALGIICIFAKEAFAM) threads the bilayer. Over 269 to 275 (QGAARRK) the chain is Cytoplasmic. The helical transmembrane segment at 276 to 296 (MIVAFILMLQAVVFFVLYSQM) threads the bilayer. The Periplasmic portion of the chain corresponds to 297–321 (PTSLNFFAIRNVEHSILSIAFEPEQ). The helical transmembrane segment at 322 to 342 (FQALNPFWIMIGSPILAAIYN) threads the bilayer. Topologically, residues 343-353 (KMGDRLPMPHK) are cytoplasmic. A helical membrane pass occupies residues 354–374 (FAIGMVLCSGAFLVLPLGTKF). Over 375-384 (ATDAGIVSVN) the chain is Periplasmic. A helical transmembrane segment spans residues 385–405 (WLILSYALQSIGELMISGLGL). Residues 406 to 415 (AMVAQLVPQR) lie on the Cytoplasmic side of the membrane. A helical membrane pass occupies residues 416–436 (LMGFIMGSWFLTTAGAALIAG). Over 437–460 (KIANLMAVPENVTDPLVSLEVYGR) the chain is Periplasmic. The helical transmembrane segment at 461-481 (VFMQIGIATAVIAVLMLLTAP) threads the bilayer. At 482 to 502 (KLNRMTLEDDKAAKATDTATA) the chain is on the cytoplasmic side.

The protein belongs to the major facilitator superfamily. Proton-dependent oligopeptide transporter (POT/PTR) (TC 2.A.17) family. DtpA subfamily.

Its subcellular location is the cell inner membrane. Its function is as follows. Proton-dependent permease that transports di- and tripeptides. This is Dipeptide and tripeptide permease A from Enterobacter sp. (strain 638).